The following is a 117-amino-acid chain: Large ribosomal subunit protein bL20c (117 aa).

This sequence belongs to the bacterial ribosomal protein bL20 family.

The protein resides in the plastid. It localises to the chloroplast. Binds directly to 23S ribosomal RNA and is necessary for the in vitro assembly process of the 50S ribosomal subunit. It is not involved in the protein synthesizing functions of that subunit. This Arabidopsis thaliana (Mouse-ear cress) protein is Large ribosomal subunit protein bL20c (rpl20).